The following is an 89-amino-acid chain: Small ribosomal subunit protein uS15 (89 aa).

A compositionally biased stretch (basic and acidic residues) spans 1-21 (MSVDAETKTKIIKDNARDKND). The tract at residues 1 to 26 (MSVDAETKTKIIKDNARDKNDTGSPE) is disordered.

It belongs to the universal ribosomal protein uS15 family. In terms of assembly, part of the 30S ribosomal subunit. Forms a bridge to the 50S subunit in the 70S ribosome, contacting the 23S rRNA.

One of the primary rRNA binding proteins, it binds directly to 16S rRNA where it helps nucleate assembly of the platform of the 30S subunit by binding and bridging several RNA helices of the 16S rRNA. Its function is as follows. Forms an intersubunit bridge (bridge B4) with the 23S rRNA of the 50S subunit in the ribosome. This is Small ribosomal subunit protein uS15 from Erythrobacter litoralis (strain HTCC2594).